The chain runs to 604 residues: Envelope glycoprotein E (604 aa).

The first 24 residues, 1-24, serve as a signal peptide directing secretion; it reads MRMTVVKHVMLTLICGTLSWGVQI. Residues 25 to 526 are Virion surface-facing; the sequence is NTLAYASAIK…NTFPFKTYAG (502 aa). A glycan (N-linked (GlcNAc...) asparagine; by host) is linked at N117. The interaction with gI stretch occupies residues 192-219; that stretch reads CKLTPPSIQQVCIKHGACIHDVVVDVDC. N249 and N303 each carry an N-linked (GlcNAc...) asparagine; by host glycan. 3 disulfides stabilise this stretch: C370-C396, C379-C388, and C415-C424. N419 and N505 each carry an N-linked (GlcNAc...) asparagine; by host glycan. The chain crosses the membrane as a helical span at residues 527–544; it reads ITGGFAVLALVCLALALV. At 545–604 the chain is on the intravirion side; that stretch reads CTKRKFGHRSYWSDKAAYGQSTYYAGVPVDDFEDDTEVEVDEGAECGGSGYTVYIDKRTR. Positions 568-571 match the Internalization motif motif; sequence YAGV. An acidic region spans residues 574–586; sequence DDFEDDTEVEVDE.

It belongs to the alphaherpesvirinae glycoprotein E family. Interacts with gI. Phosphorylated within the acidic cluster. Phosphorylation determines whether endocytosed viral gE traffics to the trans-Golgi network or recycles to the cell membrane.

It is found in the virion membrane. Its subcellular location is the host cell membrane. It localises to the host cell junction. The protein localises to the host Golgi apparatus membrane. The protein resides in the host endosome membrane. In terms of biological role, in epithelial cells, the heterodimer gE/gI is required for the cell-to-cell spread of the virus, by sorting nascent virions to cell junctions. Once the virus reaches the cell junctions, virus particles can spread to adjacent cells extremely rapidly through interactions with cellular receptors that accumulate at these junctions. Implicated in basolateral spread in polarized cells. In neuronal cells, gE/gI is essential for the anterograde spread of the infection throughout the host nervous system. Together with US9, the heterodimer gE/gI is involved in the sorting and transport of viral structural components toward axon tips. The polypeptide is Envelope glycoprotein E (gE) (Cercopithecine herpesvirus 9 (strain DHV) (CeHV-9)).